We begin with the raw amino-acid sequence, 280 residues long: UDP-3-O-acyl-N-acetylglucosamine deacetylase (280 aa).

3 residues coordinate Zn(2+): His-79, His-237, and Asp-241. Residue His-264 is the Proton donor of the active site.

The protein belongs to the LpxC family. Zn(2+) serves as cofactor.

It carries out the reaction a UDP-3-O-[(3R)-3-hydroxyacyl]-N-acetyl-alpha-D-glucosamine + H2O = a UDP-3-O-[(3R)-3-hydroxyacyl]-alpha-D-glucosamine + acetate. It functions in the pathway glycolipid biosynthesis; lipid IV(A) biosynthesis; lipid IV(A) from (3R)-3-hydroxytetradecanoyl-[acyl-carrier-protein] and UDP-N-acetyl-alpha-D-glucosamine: step 2/6. Catalyzes the hydrolysis of UDP-3-O-myristoyl-N-acetylglucosamine to form UDP-3-O-myristoylglucosamine and acetate, the committed step in lipid A biosynthesis. The sequence is that of UDP-3-O-acyl-N-acetylglucosamine deacetylase from Chlamydia abortus (strain DSM 27085 / S26/3) (Chlamydophila abortus).